Here is a 251-residue protein sequence, read N- to C-terminus: Flap endonuclease Xni (251 aa).

A Mg(2+)-binding site is contributed by Asp104. The 5'-3' exonuclease domain occupies 160 to 249; sequence VQPQQLPDYW…IDGNLQQLRL (90 aa). K(+) contacts are provided by Leu171, Ala172, Pro180, Val182, and Ile185. The interval 184–189 is interaction with DNA; sequence GIGPKS.

The protein belongs to the Xni family. Requires Mg(2+) as cofactor. K(+) is required as a cofactor.

Its function is as follows. Has flap endonuclease activity. During DNA replication, flap endonucleases cleave the 5'-overhanging flap structure that is generated by displacement synthesis when DNA polymerase encounters the 5'-end of a downstream Okazaki fragment. The chain is Flap endonuclease Xni from Escherichia coli O45:K1 (strain S88 / ExPEC).